Reading from the N-terminus, the 521-residue chain is MIKQALISVSDKTGIVDFAKSLSDLGVKLLSTGGTAKLLADAGLPVTEVADYTGFPEMLDGRVKTLHPKVHGGILARRDLPEHMQALEQHDIPTIDLLVVNLYPFVATIAKDDCTLADAIENIDIGGPTMLRSAAKNHRDVTVVVDPADYAVVLDEMKANGNAIGYATNFRLATKVFAHTAQYDGAITNYLTSLTDELQHASRSAYPATLNMAFDKVQDLRYGENPHQSAAFYRDLAAPAGALANYRQLQGKELSYNNIADSDAAWECVKTFDVPACVIIKHANPCGVAVGNDSADAYAKAFQTDPTSAFGGIIAFNREVDEAAAQAVAKQFVEVLIAPSFSDAAKQVFAAKQNVRLLEIALGDGHNAFDLKRVGGGLLVQSLDSKNVQPSELRVVTKRQPSAKEMDDLLFAWRVAKYVKSNAIVFCGNGMTLGVGAGQMSRVDSARIASIKAQNAGLTLAGSAVASDAFFPFRDGLDVVVAAGATCVIQPGGSMRDDEVIAAADEHGIAMILTGVRHFRH.

The region spanning 1-145 is the MGS-like domain; the sequence is MIKQALISVS…KNHRDVTVVV (145 aa).

The protein belongs to the PurH family.

The catalysed reaction is (6R)-10-formyltetrahydrofolate + 5-amino-1-(5-phospho-beta-D-ribosyl)imidazole-4-carboxamide = 5-formamido-1-(5-phospho-D-ribosyl)imidazole-4-carboxamide + (6S)-5,6,7,8-tetrahydrofolate. The enzyme catalyses IMP + H2O = 5-formamido-1-(5-phospho-D-ribosyl)imidazole-4-carboxamide. It functions in the pathway purine metabolism; IMP biosynthesis via de novo pathway; 5-formamido-1-(5-phospho-D-ribosyl)imidazole-4-carboxamide from 5-amino-1-(5-phospho-D-ribosyl)imidazole-4-carboxamide (10-formyl THF route): step 1/1. It participates in purine metabolism; IMP biosynthesis via de novo pathway; IMP from 5-formamido-1-(5-phospho-D-ribosyl)imidazole-4-carboxamide: step 1/1. The protein is Bifunctional purine biosynthesis protein PurH of Burkholderia ambifaria (strain ATCC BAA-244 / DSM 16087 / CCUG 44356 / LMG 19182 / AMMD) (Burkholderia cepacia (strain AMMD)).